Consider the following 172-residue polypeptide: Adenine phosphoribosyltransferase (172 aa).

This sequence belongs to the purine/pyrimidine phosphoribosyltransferase family. Homodimer.

The protein localises to the cytoplasm. It carries out the reaction AMP + diphosphate = 5-phospho-alpha-D-ribose 1-diphosphate + adenine. The protein operates within purine metabolism; AMP biosynthesis via salvage pathway; AMP from adenine: step 1/1. Catalyzes a salvage reaction resulting in the formation of AMP, that is energically less costly than de novo synthesis. In Methanococcus maripaludis (strain DSM 14266 / JCM 13030 / NBRC 101832 / S2 / LL), this protein is Adenine phosphoribosyltransferase.